The sequence spans 203 residues: Outer-membrane lipoprotein carrier protein (203 aa).

Residues 1-21 (MKKLLVACCLLSGLISAHALA) form the signal peptide.

The protein belongs to the LolA family. Monomer.

Its subcellular location is the periplasm. Its function is as follows. Participates in the translocation of lipoproteins from the inner membrane to the outer membrane. Only forms a complex with a lipoprotein if the residue after the N-terminal Cys is not an aspartate (The Asp acts as a targeting signal to indicate that the lipoprotein should stay in the inner membrane). The chain is Outer-membrane lipoprotein carrier protein from Yersinia enterocolitica serotype O:8 / biotype 1B (strain NCTC 13174 / 8081).